A 291-amino-acid chain; its full sequence is MTFQNLILSLQNYWANQGCVIQQPYDTEKGAGTFNPATFLRVLGPEPWNVAYVEPSRRPTDGRYGENPNRLQHYYQFQVIMKPSPANILDLYLDSLRAFGINPSQHDIRFVEDDWESPTLGAWGLGWEVWLDGMEITQFTYFQQAGGIDLKPVSSEITYGCERIAMYLQGVDNVYDLEWVKGVKYGDIHHQTEVEFSTYNFEEADVALLLELFGKYEKECIRLAEKDLVFPAYDFVMKCSHTFNLLDARGAISVTERASYIGRVRNVARLCAEGYVRQRERLGYPMLKGGN.

This sequence belongs to the class-II aminoacyl-tRNA synthetase family. As to quaternary structure, tetramer of two alpha and two beta subunits.

It is found in the cytoplasm. It carries out the reaction tRNA(Gly) + glycine + ATP = glycyl-tRNA(Gly) + AMP + diphosphate. The chain is Glycine--tRNA ligase alpha subunit from Trichlorobacter lovleyi (strain ATCC BAA-1151 / DSM 17278 / SZ) (Geobacter lovleyi).